The following is a 209-amino-acid chain: ATP-dependent Clp protease proteolytic subunit (209 aa).

Catalysis depends on S113, which acts as the Nucleophile. H138 is an active-site residue.

It belongs to the peptidase S14 family. Fourteen ClpP subunits assemble into 2 heptameric rings which stack back to back to give a disk-like structure with a central cavity, resembling the structure of eukaryotic proteasomes.

It is found in the cytoplasm. The catalysed reaction is Hydrolysis of proteins to small peptides in the presence of ATP and magnesium. alpha-casein is the usual test substrate. In the absence of ATP, only oligopeptides shorter than five residues are hydrolyzed (such as succinyl-Leu-Tyr-|-NHMec, and Leu-Tyr-Leu-|-Tyr-Trp, in which cleavage of the -Tyr-|-Leu- and -Tyr-|-Trp bonds also occurs).. Functionally, cleaves peptides in various proteins in a process that requires ATP hydrolysis. Has a chymotrypsin-like activity. Plays a major role in the degradation of misfolded proteins. In Blochmanniella floridana, this protein is ATP-dependent Clp protease proteolytic subunit.